The sequence spans 121 residues: Large ribosomal subunit protein uL18 (121 aa).

The protein belongs to the universal ribosomal protein uL18 family. As to quaternary structure, part of the 50S ribosomal subunit; part of the 5S rRNA/L5/L18/L25 subcomplex. Contacts the 5S and 23S rRNAs.

Functionally, this is one of the proteins that bind and probably mediate the attachment of the 5S RNA into the large ribosomal subunit, where it forms part of the central protuberance. This is Large ribosomal subunit protein uL18 from Paracidovorax citrulli (strain AAC00-1) (Acidovorax citrulli).